Here is a 293-residue protein sequence, read N- to C-terminus: GTPase Era (293 aa).

In terms of domain architecture, Era-type G spans 5–174 (RTISVCIIGR…ITGKAQIAPW (170 aa)). The interval 13–20 (GRPNSGKS) is G1. 13 to 20 (GRPNSGKS) contributes to the GTP binding site. A G2 region spans residues 39–43 (QTTRS). A G3 region spans residues 60-63 (DTPG). Residues 60 to 64 (DTPGI) and 122 to 125 (NKID) contribute to the GTP site. Positions 122–125 (NKID) are G4. The G5 stretch occupies residues 150 to 152 (ISA). Positions 202 to 279 (LQQELPYKLT…HLFLFVKVHE (78 aa)) constitute a KH type-2 domain.

This sequence belongs to the TRAFAC class TrmE-Era-EngA-EngB-Septin-like GTPase superfamily. Era GTPase family. As to quaternary structure, monomer.

The protein resides in the cytoplasm. It is found in the cell inner membrane. In terms of biological role, an essential GTPase that binds both GDP and GTP, with rapid nucleotide exchange. Plays a role in 16S rRNA processing and 30S ribosomal subunit biogenesis and possibly also in cell cycle regulation and energy metabolism. The protein is GTPase Era of Rickettsia akari (strain Hartford).